The sequence spans 370 residues: tRNA-specific 2-thiouridylase MnmA (370 aa).

Residues 10–17 and Met-36 contribute to the ATP site; that span reads AMSGGVDS. Cys-111 acts as the Nucleophile in catalysis. Cys-111 and Cys-209 are joined by a disulfide. Gly-135 serves as a coordination point for ATP. Residues 159-161 are interaction with tRNA; it reads KDQ. Cys-209 (cysteine persulfide intermediate) is an active-site residue.

This sequence belongs to the MnmA/TRMU family.

The protein resides in the cytoplasm. The enzyme catalyses S-sulfanyl-L-cysteinyl-[protein] + uridine(34) in tRNA + AH2 + ATP = 2-thiouridine(34) in tRNA + L-cysteinyl-[protein] + A + AMP + diphosphate + H(+). Functionally, catalyzes the 2-thiolation of uridine at the wobble position (U34) of tRNA, leading to the formation of s(2)U34. The sequence is that of tRNA-specific 2-thiouridylase MnmA from Koribacter versatilis (strain Ellin345).